Here is a 766-residue protein sequence, read N- to C-terminus: Ent-copalyl diphosphate synthase 3 (766 aa).

A chloroplast-targeting transit peptide spans 1–30 (FRSTAAGRCLPVTCCVFPRHFRVSSSSILP). Position 222 (Lys-222) interacts with substrate. The Mg(2+) site is built by Asp-354 and Asp-356. The DXDD motif signature appears at 354-357 (DVDD). Lys-440 serves as a coordination point for substrate.

Belongs to the terpene synthase family. Tpsc subfamily. Mg(2+) serves as cofactor. In terms of tissue distribution, accumulates in leaves, and, at low levels, in germinating seeds.

The protein localises to the plastid. The protein resides in the chloroplast. It catalyses the reaction (2E,6E,10E)-geranylgeranyl diphosphate = ent-copalyl diphosphate. It functions in the pathway plant hormone biosynthesis; gibberellin biosynthesis. Its pathway is secondary metabolite biosynthesis; terpenoid biosynthesis. In terms of biological role, involved in the biosynthesis of ent-kaurene diterpenoids natural products such as oridonin, miltiradiene, eriocalyxin B and nezukol, known to exhibit antitumor, anti-inflammatory and antibacterial activities, and in the production of gibberellins phytohormones. Catalyzes the conversion of (2E,6E,10E)-geranylgeranyl diphosphate (GGPP) to ent-copalyl diphosphate (ent-CPP). This Isodon eriocalyx (Plectranthus eriocalyx) protein is Ent-copalyl diphosphate synthase 3.